Consider the following 131-residue polypeptide: Small ribosomal subunit protein uS8 (131 aa).

Belongs to the universal ribosomal protein uS8 family. In terms of assembly, part of the 30S ribosomal subunit. Contacts proteins S5 and S12.

One of the primary rRNA binding proteins, it binds directly to 16S rRNA central domain where it helps coordinate assembly of the platform of the 30S subunit. The polypeptide is Small ribosomal subunit protein uS8 (Bordetella avium (strain 197N)).